The sequence spans 132 residues: Small ribosomal subunit protein uS11 (132 aa).

Belongs to the universal ribosomal protein uS11 family. As to quaternary structure, part of the 30S ribosomal subunit. Interacts with proteins S7 and S18. Binds to IF-3.

In terms of biological role, located on the platform of the 30S subunit, it bridges several disparate RNA helices of the 16S rRNA. Forms part of the Shine-Dalgarno cleft in the 70S ribosome. This Chlamydia abortus (strain DSM 27085 / S26/3) (Chlamydophila abortus) protein is Small ribosomal subunit protein uS11.